A 443-amino-acid chain; its full sequence is MAKKKGLFTVLKRIFISEVNSEKKEKRRKWTFWKLRIKKRLPSITAPPEHRTSHESHEEQKEEIVSDVGEISQVSCSRQLDSIEESKGSTSPETADLVVQYQMFLNRQEEVLAATRIQTAFRGHLARKALRALKGIVKLQAYIRGRAVRRQAMTTLKCLQSVVNIQSQVCGKRTQIPGGVHRDYEESNIFNDNILKVDTNGQKRWDDSLLTKEEKEAVVMSKKEASLRRERIKEYAVTHRKSAESYQKRSNTKWKYWLDEWVDTQLTKSKELEDLDFSSKTKPKDETLNEKQLKTPRNSSPRRLVNNHRRQVSIGEDEQSPAAVTITTPTYMVATESAKAKSRSLSSPRIRPRSFDTQSESYSPYKNKLCLTTSMMSEAPSKVRIANNGSNTRPSAYQQRSPGLRGFNIGPLKSCNNNNTLLNDLSINSERSLPSWNKQSSLR.

The calmodulin-binding stretch occupies residues 5 to 20; it reads KGLFTVLKRIFISEVN. 2 consecutive short sequence motifs (nuclear localization signal) follow at residues 11–18 and 27–34; these read LKRIFISE and RRKWTFWK. Positions 44-65 are disordered; that stretch reads ITAPPEHRTSHESHEEQKEEIV. A compositionally biased stretch (basic and acidic residues) spans 48 to 64; that stretch reads PEHRTSHESHEEQKEEI. IQ domains follow at residues 113-138 and 139-161; these read AATR…GIVK and LQAY…CLQS. Over residues 277-293 the composition is skewed to basic and acidic residues; it reads FSSKTKPKDETLNEKQL. Residues 277 to 361 are disordered; it reads FSSKTKPKDE…PRSFDTQSES (85 aa).

This sequence belongs to the IQD family. Binds to multiple calmodulin (CaM) in the presence of Ca(2+) and CaM-like proteins. As to expression, expressed in hypocotyls, cotyledons, leaves and petioles.

Its subcellular location is the nucleus. It is found in the cytoplasm. The protein localises to the cytoskeleton. In terms of biological role, may be involved in cooperative interactions with calmodulins or calmodulin-like proteins. Recruits calmodulin proteins to microtubules, thus being a potential scaffold in cellular signaling and trafficking. Regulates cell shape and elongation in aerial organs (i.e. epidermis pavement cells) probably by regulating cortical microtubules (MT) arrays orientation. May associate with nucleic acids and regulate gene expression at the transcriptional or post-transcriptional level. This chain is Protein IQ-DOMAIN 11, found in Arabidopsis thaliana (Mouse-ear cress).